The sequence spans 469 residues: Dihydrolipoyl dehydrogenase (469 aa).

Residues 34 to 42 (EKQYWGGVC), lysine 51, and glycine 114 each bind FAD. The cysteines at positions 42 and 47 are disulfide-linked. Residues 179–183 (GAGAI), glutamate 202, and 269–272 (SVGF) contribute to the NAD(+) site. Aspartate 312 and alanine 320 together coordinate FAD. Histidine 448 serves as the catalytic Proton acceptor.

Belongs to the class-I pyridine nucleotide-disulfide oxidoreductase family. In terms of assembly, homodimer. Part of an unusual ODH/PDH supercomplex, consisting of AceE (E1), AceF (E2), and Lpd (E3) together with OdhA (E1+E2). FAD is required as a cofactor.

The protein localises to the cytoplasm. It carries out the reaction N(6)-[(R)-dihydrolipoyl]-L-lysyl-[protein] + NAD(+) = N(6)-[(R)-lipoyl]-L-lysyl-[protein] + NADH + H(+). It participates in carbohydrate metabolism; tricarboxylic acid cycle; succinyl-CoA from 2-oxoglutarate (dehydrogenase route): step 1/1. Functionally, lipoamide dehydrogenase is an essential component of the pyruvate dehydrogenase (PDH) and 2-oxoglutarate dehydrogenase (ODH) complexes. Catalyzes the reoxidation of dihydrolipoyl groups which are covalently attached to the lipoate acyltransferase components (E2) of the complexes. Also catalyzes a reversible NADH:NAD(+) transhydrogenation, and is able to transfer electrons from NADH to various redox-active compounds and quinones. May be involved in quinone redox cycling in C.glutamicum. The chain is Dihydrolipoyl dehydrogenase (lpd) from Corynebacterium glutamicum (strain ATCC 13032 / DSM 20300 / JCM 1318 / BCRC 11384 / CCUG 27702 / LMG 3730 / NBRC 12168 / NCIMB 10025 / NRRL B-2784 / 534).